We begin with the raw amino-acid sequence, 515 residues long: AAA ATPase forming ring-shaped complexes (515 aa).

Residues 2–49 adopt a coiled-coil conformation; the sequence is NDHDEETLASLQQANDQLMAKNHALVKALSRATQEMTKTKAQLNQLAG. Residue 240-245 participates in ATP binding; that stretch reads GNGKTL.

Belongs to the AAA ATPase family. In terms of assembly, homohexamer. Assembles into a hexameric ring structure.

The protein is AAA ATPase forming ring-shaped complexes of Bifidobacterium adolescentis (strain ATCC 15703 / DSM 20083 / NCTC 11814 / E194a).